Here is a 352-residue protein sequence, read N- to C-terminus: 4-hydroxybenzaldehyde synthase, chloroplastic (352 aa).

N-linked (GlcNAc...) asparagine glycosylation is present at Asn-122. 2 cysteine pairs are disulfide-bonded: Cys-159–Cys-199 and Cys-190–Cys-231. Asn-247 carries N-linked (GlcNAc...) asparagine glycosylation. A disulfide bridge connects residues Cys-289 and Cys-339. Active-site residues include His-298 and Asn-318.

This sequence belongs to the peptidase C1 family. In terms of assembly, forms homodimers, homotrimers and homotetramers. In terms of tissue distribution, mainly expressed in pods, but also present in stems, roots, leaves and embryos (at protein level).

The protein localises to the plastid. It is found in the chloroplast. The enzyme catalyses (E)-4-coumarate + H2O = 4-hydroxybenzaldehyde + acetate. Its pathway is aromatic compound metabolism; phenylpropanoid biosynthesis. With respect to regulation, inhibited by ascorbate. In terms of biological role, involved in the biosynthesis of vanillin (4-hydroxy-3-methoxy-benzaldehyde) and derivative natural products, key components of vanilla pods flavor. Catalyzes the conversion of (E)-4-coumarate to 4-hydroxybenzaldehyde, a vanillin precursor. Mediates the conversion of ferulic acid to 3-methoxy-4-hydroxybenzaldehyde with a very low efficiency. Cannot use cinnamic, caffeic, sinapic and o-coumaric acids as substrates. The chain is 4-hydroxybenzaldehyde synthase, chloroplastic from Vanilla planifolia (Vanilla).